We begin with the raw amino-acid sequence, 541 residues long: Protein MGF 505-10R (541 aa).

Belongs to the asfivirus MGF 505 family.

In terms of biological role, plays a role in virus cell tropism, and may be required for efficient virus replication in macrophages. The chain is Protein MGF 505-10R from Ornithodoros (relapsing fever ticks).